Here is a 132-residue protein sequence, read N- to C-terminus: Small ribosomal subunit protein bS6 (132 aa).

The protein belongs to the bacterial ribosomal protein bS6 family.

In terms of biological role, binds together with bS18 to 16S ribosomal RNA. In Chlorobium chlorochromatii (strain CaD3), this protein is Small ribosomal subunit protein bS6.